The primary structure comprises 430 residues: tRNA(Ile)-lysidine synthase (430 aa).

Position 21–26 (21–26) interacts with ATP; the sequence is SGGLDS.

Belongs to the tRNA(Ile)-lysidine synthase family.

Its subcellular location is the cytoplasm. The catalysed reaction is cytidine(34) in tRNA(Ile2) + L-lysine + ATP = lysidine(34) in tRNA(Ile2) + AMP + diphosphate + H(+). Its function is as follows. Ligates lysine onto the cytidine present at position 34 of the AUA codon-specific tRNA(Ile) that contains the anticodon CAU, in an ATP-dependent manner. Cytidine is converted to lysidine, thus changing the amino acid specificity of the tRNA from methionine to isoleucine. In Salmonella paratyphi B (strain ATCC BAA-1250 / SPB7), this protein is tRNA(Ile)-lysidine synthase.